Here is an 84-residue protein sequence, read N- to C-terminus: Large ribosomal subunit protein bL27 (84 aa).

The disordered stretch occupies residues 1–22 (MAHKKGASSTRNGRDSNAQRLG). Over residues 7-19 (ASSTRNGRDSNAQ) the composition is skewed to polar residues.

Belongs to the bacterial ribosomal protein bL27 family.

The polypeptide is Large ribosomal subunit protein bL27 (Streptomyces avermitilis (strain ATCC 31267 / DSM 46492 / JCM 5070 / NBRC 14893 / NCIMB 12804 / NRRL 8165 / MA-4680)).